Reading from the N-terminus, the 379-residue chain is Demethylspheroidene O-methyltransferase (379 aa).

2 residues coordinate S-adenosyl-L-methionine: aspartate 235 and arginine 279.

This sequence belongs to the class I-like SAM-binding methyltransferase superfamily. Cation-independent O-methyltransferase family.

The enzyme catalyses demethylspheroidene + S-adenosyl-L-methionine = spheroidene + S-adenosyl-L-homocysteine + H(+). The protein operates within carotenoid biosynthesis; spheroidene biosynthesis. Its function is as follows. Methyltransferase that mediates the O-methylation of 1-hydroxy carotenoids. Converts hydroxyneurosporene to methoxyneurosporene or demethylspheroidene to spheroidene. Also able to produce spirilloxanthin. In Cereibacter sphaeroides (strain ATCC 17023 / DSM 158 / JCM 6121 / CCUG 31486 / LMG 2827 / NBRC 12203 / NCIMB 8253 / ATH 2.4.1.) (Rhodobacter sphaeroides), this protein is Demethylspheroidene O-methyltransferase (crtF).